A 247-amino-acid chain; its full sequence is Uridylate kinase (247 aa).

18–21 contributes to the ATP binding site; that stretch reads KLSG. Residue glycine 60 coordinates UMP. Positions 61 and 65 each coordinate ATP. Residues aspartate 80 and 141–148 contribute to the UMP site; that span reads TGNPFFTT. Threonine 168, tyrosine 174, and aspartate 177 together coordinate ATP.

The protein belongs to the UMP kinase family. As to quaternary structure, homohexamer.

It is found in the cytoplasm. The enzyme catalyses UMP + ATP = UDP + ADP. The protein operates within pyrimidine metabolism; CTP biosynthesis via de novo pathway; UDP from UMP (UMPK route): step 1/1. Inhibited by UTP. Its function is as follows. Catalyzes the reversible phosphorylation of UMP to UDP. This chain is Uridylate kinase, found in Pseudomonas putida (strain ATCC 47054 / DSM 6125 / CFBP 8728 / NCIMB 11950 / KT2440).